We begin with the raw amino-acid sequence, 120 residues long: Large ribosomal subunit protein uL18 (120 aa).

It belongs to the universal ribosomal protein uL18 family. Part of the 50S ribosomal subunit; part of the 5S rRNA/L5/L18/L25 subcomplex. Contacts the 5S and 23S rRNAs.

Functionally, this is one of the proteins that bind and probably mediate the attachment of the 5S RNA into the large ribosomal subunit, where it forms part of the central protuberance. This Maricaulis maris (strain MCS10) (Caulobacter maris) protein is Large ribosomal subunit protein uL18.